Consider the following 223-residue polypeptide: uncharacterized protein (223 aa).

Helical transmembrane passes span 22 to 42 (LTVG…FVVV), 59 to 79 (GVAL…ATLI), 85 to 105 (IFSL…WCSM), and 164 to 184 (MAWA…SQAF).

This sequence belongs to the Rht family.

Its subcellular location is the cell membrane. This is an uncharacterized protein from Escherichia coli (strain K12).